The chain runs to 757 residues: MDVNPTLLFLKVPAQNAISTTFPYTGDPPYSHGTGTGYTMDTVNRTHQYSERGKWTTNTETGAPQLNPIDGPLPEDNEPSGYAQTDCVLEAMAFLEESHPGIFENSCLETMEVVQQTRVDKLTQGRQTYDWTLNRNQPAATALANTIEVFRSNGLTANESGRLIDFLKDVMESMDKEEMEITTHFQRKRRVRDNMTKRMVTQRTIGKKKQRLNKRSYLIRALTLNTMTKDAERGKLKRRAIATPGMQIRGFVYFVEALARSICEKLEQSGLPVGGNEKKAKLANVVRKMMTNSQDTELSFTITGDNTKWNENQNPRMFLAMITYITRNQPEWFRNVLSIAPIMFSNKMARLGKGYMFESKSMKLRTQIPAEMLATIDLKYFNDSTRKKIEKIRPLLIDGTASLSPGMMMGMFNMLSTVLGVSILNLGQKRYTKTTYWWDGLQSSDDFALIVNAPNHEGIQAGVDRFYRTCKLVGINMSKKKSYINRTGTFEFTSFFYRYGFVANFSMELPSFGVSGINESADMSIGVTVIKNNMINNDLGPATAQMALQLFIKDYRYTYRCHRGDTQIQTRRSFEIKKLWEQTRSKAGLLVSDGGPNLYNIRNLHIPEVCLKWELMDEDYQGRLCNPLNPFVSHKEIESVNNAVVMPAHGPAKSMEYDAVATTHSWIPKRNRSILNTSQRGILEDEQMYQKCCNLFEKFFPSSSYRRPVGISSMVEAMVSRARIDARIDFESGRIKKEEFAEIMKICSTIEELRRQK.

The interval R52 to Y82 is disordered. Residues W55–P64 show a composition bias toward polar residues. 2 consecutive short sequence motifs (nuclear localization signal) follow at residues R187 to M195 and R203 to S216. A promoter-binding site region spans residues R249–E256. The RdRp catalytic domain maps to V286 to Y483.

Belongs to the influenza viruses polymerase PB1 family. As to quaternary structure, influenza RNA polymerase is composed of three subunits: PB1, PB2 and PA. Interacts (via N-terminus) with PA (via C-terminus). Interacts (via C-terminus) with PB2 (via N-terminus); this interaction is essential for transcription initiation. Phosphorylated by host PRKCA.

It is found in the host nucleus. Its subcellular location is the host cytoplasm. The enzyme catalyses RNA(n) + a ribonucleoside 5'-triphosphate = RNA(n+1) + diphosphate. RNA-dependent RNA polymerase which is responsible for replication and transcription of virus RNA segments. The transcription of viral mRNAs occurs by a unique mechanism called cap-snatching. 5' methylated caps of cellular mRNAs are cleaved after 10-13 nucleotides by PA. In turn, these short capped RNAs are used as primers by PB1 for transcription of viral mRNAs. During virus replication, PB1 initiates RNA synthesis and copy vRNA into complementary RNA (cRNA) which in turn serves as a template for the production of more vRNAs. This Aves protein is RNA-directed RNA polymerase catalytic subunit.